The chain runs to 544 residues: Probable protein kinase UbiB (544 aa).

In terms of domain architecture, Protein kinase spans 123-501; sequence EFDIKPLASA…KRQQATGKFL (379 aa). ATP contacts are provided by residues 129 to 137 and K152; that span reads LASASIAQV. D287 acts as the Proton acceptor in catalysis. The next 2 membrane-spanning stretches (helical) occupy residues 496 to 516 and 519 to 539; these read ATGKFLFGVGATLVVCSAILV and AYEQLSIASGIAGVTFWLLSW.

Belongs to the ABC1 family. UbiB subfamily.

It is found in the cell inner membrane. Its pathway is cofactor biosynthesis; ubiquinone biosynthesis [regulation]. Functionally, is probably a protein kinase regulator of UbiI activity which is involved in aerobic coenzyme Q (ubiquinone) biosynthesis. This Vibrio campbellii (strain ATCC BAA-1116) protein is Probable protein kinase UbiB.